The chain runs to 1100 residues: Sorbin and SH3 domain-containing protein 2 (1100 aa).

Phosphoserine is present on residues Tyr13, Ser14, His27, Gly28, Ser30, and Ser43. Polar residues predominate over residues 30-52; sequence SLDSTDTYPQHAQSLDGTTSSSI. Residues 30–57 are disordered; that stretch reads SLDSTDTYPQHAQSLDGTTSSSIPLYRS. The 62-residue stretch at 66–127 folds into the SoHo domain; sequence VIKAPHYPGI…YNTPYTYNAG (62 aa). The span at 134–147 shows a compositional bias: polar residues; the sequence is SAQSHPAAKTQTYR. Residues 134–311 are disordered; that stretch reads SAQSHPAAKT…SPSRAKGGDD (178 aa). Residue His153 is modified to Alanine amide. 2 positions are modified to phosphoserine: Ser154 and Ser157. The segment covering 167 to 180 has biased composition (pro residues); it reads PVPPPHVPPPVPPL. Positions 181-217 are enriched in basic and acidic residues; it reads RPRDRSSTEKHDWDPPDRKVDTRKFRSEPRSIFEYEP. Residues Ser234 and Ile236 each carry the phosphothreonine modification. Phosphoserine occurs at positions 239, 245, 248, 258, 259, and 260. Phosphothreonine is present on residues Thr277, Gly280, and Val282. Ser287 is modified (phosphoserine). The span at 287–304 shows a compositional bias: low complexity; sequence SSTTLTKSFTSSSPSSPS. Thr292 is modified (phosphothreonine). 10 positions are modified to phosphoserine: Phe295, Ser297, Ser298, Ser299, Ser301, Ser302, Ser304, Ala306, Asp311, and Pro316. Ser320, Ser322, and Gly326 each carry phosphothreonine. His341, Val344, and Arg346 each carry phosphoserine. Glu366 carries the phosphothreonine modification. Phosphoserine is present on residues Ser381 and Ser383. A phosphothreonine mark is found at Asp413 and Lys415. Residues Arg437 and Arg439 each carry the phosphoserine modification. At Ile459 the chain carries Phosphothreonine. Phosphoserine occurs at positions 474, 494, 497, 550, and 750. Residues 807 to 866 form a disordered region; sequence RMPRSASFQDVDTANSSCHHQDRGGALQDRESPRSYSSTLTDMGRSAPRERRGTPEKEKL. Over residues 812 to 824 the composition is skewed to polar residues; that stretch reads ASFQDVDTANSSC. A compositionally biased stretch (basic and acidic residues) spans 825 to 839; it reads HHQDRGGALQDRESP. Ser843 is modified (phosphoserine). A compositionally biased stretch (basic and acidic residues) spans 853 to 866; it reads APRERRGTPEKEKL. SH3 domains follow at residues 863 to 922 and 938 to 999; these read KEKL…KLTP and GEIG…VVKK. Residues Ser1017 and Ser1023 each carry the phosphoserine modification. Residues 1041–1100 enclose the SH3 3 domain; it reads GGGEPFQALYNYTPRNEDELELRESDVIDVMEKCDDGWFVGTSRRTKFFGTFPGNYVKRL.

Interacts with ABL, CBL, DNM1, DNM2, FLOT1, AFDN, PTK2B/PYK2, SAPAP, SPTAN1, SYNJ1, SYNJ2, VCL/vinculin and WASF. Interacts with ABL1/c-Abl, ABL2/v-Abl/Arg, ACTN, CBL and PALLD. Interacts with PTPN12 and WASF1 via its SH3 domains; this interaction may mediate the partial PTPN12 and WASF1 translocation to focal adhesion sites. Ubiquitinated by CBL. In terms of processing, dephosphorylated by PTPN12. In terms of tissue distribution, abundantly expressed in heart. In cardiac muscle cells, located in the Z-disks of sarcomere. Also found, but to a lower extent, in small and large intestine, pancreas, thymus, colon, spleen, prostate, testis, brain, ovary and epithelial cells. In the pancreas, mainly expressed in acinar cells, duct cells and all cell types in islets (at protein level). Tends to be down-regulated in pancreatic adenocarcinomas ans metastases.

It localises to the cytoplasm. Its subcellular location is the perinuclear region. It is found in the apical cell membrane. The protein resides in the cell junction. The protein localises to the focal adhesion. It localises to the cell projection. Its subcellular location is the lamellipodium. Functionally, adapter protein that plays a role in the assembling of signaling complexes, being a link between ABL kinases and actin cytoskeleton. Can form complex with ABL1 and CBL, thus promoting ubiquitination and degradation of ABL1. May play a role in the regulation of pancreatic cell adhesion, possibly by acting on WASF1 phosphorylation, enhancing phosphorylation by ABL1, as well as dephosphorylation by PTPN12. Isoform 6 increases water and sodium absorption in the intestine and gall-bladder. The polypeptide is Sorbin and SH3 domain-containing protein 2 (SORBS2) (Homo sapiens (Human)).